Reading from the N-terminus, the 1368-residue chain is Indole-3-acetaldehyde oxidase (1368 aa).

The 2Fe-2S ferredoxin-type domain occupies 19-108 (TSLVFAINGQ…GCSITTSDGL (90 aa)). Positions 60, 65, and 68 each coordinate [2Fe-2S] cluster. One can recognise an FAD-binding PCMH-type domain in the interval 246–427 (LHSRKYRWSS…LSLEIPSWHS (182 aa)).

It belongs to the xanthine dehydrogenase family. As to quaternary structure, aldehyde oxidases (AO) are homodimers and heterodimers of AO subunits. AO-alpha is an AAO1 homodimer; AO-beta is an AAO1-AAO2 heterodimer. Requires [2Fe-2S] cluster as cofactor. It depends on FAD as a cofactor. Mo-molybdopterin serves as cofactor. Predominantly expressed in roots, seedlings, mature siliques and seeds, and to lower extent in stems and rosettes. In seedlings, mostly expressed in lower part of hypocotyls and roots.

The protein localises to the cytoplasm. The enzyme catalyses indole-3-acetaldehyde + O2 + H2O = (indol-3-yl)acetate + H2O2 + H(+). Strongly inhibited by iodoacetate and potassium cyanide (KCN). Weakly inhibited by 2-mercaptoethanol, dithiothreitol (DTT), menadione, estradiol, 4'-(9-acridinylamino)methanesulfon-m-anisidine (mAMSA), allopurinol and tritonX-100. Not affected by p-chloromercuribenzoate. Its function is as follows. In higher plants aldehyde oxidases (AO) appear to be homo- and heterodimeric assemblies of AO subunits with probably different physiological functions. AO-alpha may be involved in the biosynthesis of auxin, and in biosynthesis of abscisic acid (ABA) in seeds. In vitro, AO-alpha uses heptaldehyde, protocatechualdehyde, benzaldehyde, indole-3-aldehyde (IAld), indole-3-acetaldehyde (IAAld), cinnamaldehyde and citral as substrates; AO-beta uses IAAld, IAld and naphtaldehyde as substrates. This chain is Indole-3-acetaldehyde oxidase (AAO1), found in Arabidopsis thaliana (Mouse-ear cress).